Here is a 300-residue protein sequence, read N- to C-terminus: Sporulation protein SPS18 (300 aa).

Positions 11 to 130 (ENRKRLLRAK…LANEVRSNDI (120 aa)) constitute an Arf-GAP domain. The segment at 28–51 (CFECKSVNPQFVSCSFGIFICVNC) adopts a C4-type zinc-finger fold.

In Saccharomyces cerevisiae (strain ATCC 204508 / S288c) (Baker's yeast), this protein is Sporulation protein SPS18 (SPS18).